The sequence spans 54 residues: MAKKENRIVITLACTECGDRNYTTTKNRKNDTNRLELMKYCPRLRKRTLHRETK.

It belongs to the bacterial ribosomal protein bL33 family.

The chain is Large ribosomal subunit protein bL33 from Herpetosiphon aurantiacus (strain ATCC 23779 / DSM 785 / 114-95).